Reading from the N-terminus, the 702-residue chain is Polyribonucleotide nucleotidyltransferase (702 aa).

The Mg(2+) site is built by aspartate 485 and aspartate 491. Positions 552 to 612 (PRTEIICIDP…EGVKKAISII (61 aa)) constitute a KH domain. The S1 motif domain maps to 622 to 690 (GEIYLGKVTK…NQGRINLSRK (69 aa)).

The protein belongs to the polyribonucleotide nucleotidyltransferase family. The cofactor is Mg(2+).

The protein resides in the cytoplasm. It carries out the reaction RNA(n+1) + phosphate = RNA(n) + a ribonucleoside 5'-diphosphate. Involved in mRNA degradation. Catalyzes the phosphorolysis of single-stranded polyribonucleotides processively in the 3'- to 5'-direction. This is Polyribonucleotide nucleotidyltransferase from Clostridium botulinum (strain Kyoto / Type A2).